Reading from the N-terminus, the 435-residue chain is 4-hydroxy-3-methylbut-2-en-1-yl diphosphate synthase (flavodoxin) (435 aa).

Residues 1 to 15 (MTDVDLRARPQEGMK) are compositionally biased toward basic and acidic residues. Residues 1 to 24 (MTDVDLRARPQEGMKEIPAGPKGR) are disordered. Cys-316, Cys-319, Cys-362, and Glu-369 together coordinate [4Fe-4S] cluster.

It belongs to the IspG family. [4Fe-4S] cluster is required as a cofactor.

The enzyme catalyses (2E)-4-hydroxy-3-methylbut-2-enyl diphosphate + oxidized [flavodoxin] + H2O + 2 H(+) = 2-C-methyl-D-erythritol 2,4-cyclic diphosphate + reduced [flavodoxin]. The protein operates within isoprenoid biosynthesis; isopentenyl diphosphate biosynthesis via DXP pathway; isopentenyl diphosphate from 1-deoxy-D-xylulose 5-phosphate: step 5/6. Converts 2C-methyl-D-erythritol 2,4-cyclodiphosphate (ME-2,4cPP) into 1-hydroxy-2-methyl-2-(E)-butenyl 4-diphosphate. The sequence is that of 4-hydroxy-3-methylbut-2-en-1-yl diphosphate synthase (flavodoxin) from Afipia carboxidovorans (strain ATCC 49405 / DSM 1227 / KCTC 32145 / OM5) (Oligotropha carboxidovorans).